Consider the following 141-residue polypeptide: Large ribosomal subunit protein uL11 (141 aa).

The protein belongs to the universal ribosomal protein uL11 family. In terms of assembly, part of the ribosomal stalk of the 50S ribosomal subunit. Interacts with L10 and the large rRNA to form the base of the stalk. L10 forms an elongated spine to which L12 dimers bind in a sequential fashion forming a multimeric L10(L12)X complex.

In terms of biological role, forms part of the ribosomal stalk which helps the ribosome interact with GTP-bound translation factors. In Acidianus ambivalens (Desulfurolobus ambivalens), this protein is Large ribosomal subunit protein uL11.